We begin with the raw amino-acid sequence, 364 residues long: UDP-N-acetylglucosamine--N-acetylmuramyl-(pentapeptide) pyrophosphoryl-undecaprenol N-acetylglucosamine transferase (364 aa).

Residues 10-12 (TGG), Asn128, Arg170, Ser199, Ile250, and Gln295 each bind UDP-N-acetyl-alpha-D-glucosamine.

Belongs to the glycosyltransferase 28 family. MurG subfamily.

It is found in the cell inner membrane. It carries out the reaction di-trans,octa-cis-undecaprenyl diphospho-N-acetyl-alpha-D-muramoyl-L-alanyl-D-glutamyl-meso-2,6-diaminopimeloyl-D-alanyl-D-alanine + UDP-N-acetyl-alpha-D-glucosamine = di-trans,octa-cis-undecaprenyl diphospho-[N-acetyl-alpha-D-glucosaminyl-(1-&gt;4)]-N-acetyl-alpha-D-muramoyl-L-alanyl-D-glutamyl-meso-2,6-diaminopimeloyl-D-alanyl-D-alanine + UDP + H(+). The protein operates within cell wall biogenesis; peptidoglycan biosynthesis. Cell wall formation. Catalyzes the transfer of a GlcNAc subunit on undecaprenyl-pyrophosphoryl-MurNAc-pentapeptide (lipid intermediate I) to form undecaprenyl-pyrophosphoryl-MurNAc-(pentapeptide)GlcNAc (lipid intermediate II). This Chlorobium phaeobacteroides (strain DSM 266 / SMG 266 / 2430) protein is UDP-N-acetylglucosamine--N-acetylmuramyl-(pentapeptide) pyrophosphoryl-undecaprenol N-acetylglucosamine transferase.